A 354-amino-acid chain; its full sequence is MDQNKQKALAAALGQIEKQFGKGSIMRLGDSKTMDIEAISTGSLSLDVALGIGGLPCGRIVEIYGPESSGKTTLTLQVIAEAQKKGKTCAFVDAEHALDPIYAAKLGVNVDDLLISQPDTGEQALEICDMLVRSNAVDVIIVDSVAALTPKAEIEGEMGDSHVGLQARLMSQALRKLTANIKNANCLCIFINQIRMKIGVMFGSPETTTGGNALKFYASVRLDIRRIGAIKEGDEVVGNETRVKVVKNKVAPPFKQAEFQIFYGAGISKEGELVDLGVKHKLIDKAGAWYSYNGEKIGQGKANVMKLFAENKAMAGEVEARLRELLLSGAVPVDDKAAPVEAEEFDAESEQEFE.

Residue 65–72 (GPESSGKT) participates in ATP binding.

Belongs to the RecA family.

Its subcellular location is the cytoplasm. In terms of biological role, can catalyze the hydrolysis of ATP in the presence of single-stranded DNA, the ATP-dependent uptake of single-stranded DNA by duplex DNA, and the ATP-dependent hybridization of homologous single-stranded DNAs. It interacts with LexA causing its activation and leading to its autocatalytic cleavage. This is Protein RecA from Aeromonas hydrophila subsp. hydrophila (strain ATCC 7966 / DSM 30187 / BCRC 13018 / CCUG 14551 / JCM 1027 / KCTC 2358 / NCIMB 9240 / NCTC 8049).